Reading from the N-terminus, the 286-residue chain is Polyamine aminopropyltransferase (286 aa).

In terms of domain architecture, PABS spans 5–238 (TMWHETLHDQ…GIMTFAWATD (234 aa)). An S-methyl-5'-thioadenosine-binding site is contributed by Gln-33. His-64 and Asp-88 together coordinate spermidine. S-methyl-5'-thioadenosine contacts are provided by residues Glu-108 and 140 to 141 (DG). Asp-158 serves as the catalytic Proton acceptor. Residue 158–161 (DCTD) participates in spermidine binding. An S-methyl-5'-thioadenosine-binding site is contributed by Pro-165.

The protein belongs to the spermidine/spermine synthase family. In terms of assembly, homodimer or homotetramer.

It localises to the cytoplasm. The enzyme catalyses S-adenosyl 3-(methylsulfanyl)propylamine + putrescine = S-methyl-5'-thioadenosine + spermidine + H(+). The protein operates within amine and polyamine biosynthesis; spermidine biosynthesis; spermidine from putrescine: step 1/1. In terms of biological role, catalyzes the irreversible transfer of a propylamine group from the amino donor S-adenosylmethioninamine (decarboxy-AdoMet) to putrescine (1,4-diaminobutane) to yield spermidine. The sequence is that of Polyamine aminopropyltransferase from Salmonella newport (strain SL254).